Reading from the N-terminus, the 750-residue chain is Photosystem I P700 chlorophyll a apoprotein A1 (750 aa).

8 consecutive transmembrane segments (helical) span residues 70–93 (VFSA…FHGA), 156–179 (LYCT…FHYH), 195–219 (LNHH…HVSL), 291–309 (IAHH…GHMY), 346–369 (WHAQ…HHMY), 385–411 (LSLF…IFMV), 433–455 (AIIS…LYIH), and 531–549 (FLVH…LILL). Residues C573 and C582 each contribute to the [4Fe-4S] cluster site. The next 2 helical transmembrane spans lie at 589–610 (HVFL…HFSW) and 664–686 (LSAY…MFLF). Position 675 (H675) interacts with chlorophyll a'. Chlorophyll a contacts are provided by M683 and Y691. W692 provides a ligand contact to phylloquinone. Residues 724–744 (AVGVTHYLLGGIATTWAFFLA) form a helical membrane-spanning segment.

Belongs to the PsaA/PsaB family. In terms of assembly, the PsaA/B heterodimer binds the P700 chlorophyll special pair and subsequent electron acceptors. PSI consists of a core antenna complex that captures photons, and an electron transfer chain that converts photonic excitation into a charge separation. The eukaryotic PSI reaction center is composed of at least 11 subunits. The cofactor is P700 is a chlorophyll a/chlorophyll a' dimer, A0 is one or more chlorophyll a, A1 is one or both phylloquinones and FX is a shared 4Fe-4S iron-sulfur center..

The protein localises to the plastid. The protein resides in the chloroplast thylakoid membrane. The enzyme catalyses reduced [plastocyanin] + hnu + oxidized [2Fe-2S]-[ferredoxin] = oxidized [plastocyanin] + reduced [2Fe-2S]-[ferredoxin]. Functionally, psaA and PsaB bind P700, the primary electron donor of photosystem I (PSI), as well as the electron acceptors A0, A1 and FX. PSI is a plastocyanin-ferredoxin oxidoreductase, converting photonic excitation into a charge separation, which transfers an electron from the donor P700 chlorophyll pair to the spectroscopically characterized acceptors A0, A1, FX, FA and FB in turn. Oxidized P700 is reduced on the lumenal side of the thylakoid membrane by plastocyanin. This Arabidopsis thaliana (Mouse-ear cress) protein is Photosystem I P700 chlorophyll a apoprotein A1.